The primary structure comprises 334 residues: WD repeat-containing protein 54 (334 aa).

3 WD repeats span residues 162–206 (GHQM…TLLT), 208–247 (IPGF…LHVQ), and 250–289 (AHAR…ESGY).

Homodimer and homotrimer; forms tight forms of dimers and trimers. Interacts with IZUMO1 and IZUMO1R/JUNO. In terms of processing, cross-linked to tightly form both dimers and trimers by TGM2. Cross-linking enhances the activation of EGF receptor-mediated signaling pathway. Cross-linking is inhibited by EGF. Ubiquitinated. EGF increases ubiquitination. In terms of tissue distribution, expressed in epithelial cells (at protein level). Isoform 3 expression is highly increased in colorectal cancer cells.

Its subcellular location is the vesicle. The protein resides in the cytoplasm. It is found in the cell membrane. Plays a role in the adhesion and fusion of the sperm-oocyte membrane through its interactions with IZUMO1 and IZUMO1R/JUNO. When cross-linked to form dimers and trimers, it has a regulatory effect on ERK signaling pathway activity in response to EGF stimulation. Colocalizes with the EGF receptor in WDR54-specific vesicle where it sustains the internalization and controls the degradation of the EGF receptor after EGF stimulation. In Homo sapiens (Human), this protein is WD repeat-containing protein 54.